The chain runs to 409 residues: Serine/threonine transporter SstT (409 aa).

9 helical membrane passes run 15–35 (LSLVTQIVIGLIAGIALALLA), 49–69 (FVSALKAVAPILVFVLVMASI), 82–102 (PILVLYLLGTFAAAVVAVIAS), 142–162 (ALMNANFIGILAWAIGMGVAI), 193–213 (LGIFGLVASTLATSGFNALLG), 218–238 (LAVLIGCMLFVALVMNPLIVF), 301–321 (GAAITITVLTLAAVHTLGIAV), 331–351 (VVAAICACGASGVAGGSLLLI), and 357–377 (LFGIPSEIAMQVVAVGFIIGV).

The protein belongs to the dicarboxylate/amino acid:cation symporter (DAACS) (TC 2.A.23) family.

It is found in the cell inner membrane. The enzyme catalyses L-serine(in) + Na(+)(in) = L-serine(out) + Na(+)(out). It carries out the reaction L-threonine(in) + Na(+)(in) = L-threonine(out) + Na(+)(out). Functionally, involved in the import of serine and threonine into the cell, with the concomitant import of sodium (symport system). The chain is Serine/threonine transporter SstT from Pseudomonas fluorescens (strain ATCC BAA-477 / NRRL B-23932 / Pf-5).